The chain runs to 300 residues: Protein YIF1B-B (300 aa).

The disordered stretch occupies residues 1 to 46; the sequence is MNQESSFRAPPKRRVRGSNPNISNPHQLFDDTSGGPVPHGGDFPNH. Residues 1 to 142 are Cytoplasmic-facing; that stretch reads MNQESSFRAP…APRFDINAPD (142 aa). Residues 143–163 form a helical membrane-spanning segment; it reads LYIPVMAFITYILVAGLALGT. At 164-178 the chain is on the extracellular side; sequence QSRFSPEILGMQASS. A helical transmembrane segment spans residues 179-199; the sequence is ALAWLIVEVLAILLSLYLVTV. At 200-205 the chain is on the cytoplasmic side; sequence NTDLTT. The chain crosses the membrane as a helical span at residues 206–226; the sequence is VDLVAFSGYKYVGMISGVIAG. Residue Leu227 is a topological domain, extracellular. The helical transmembrane segment at 228–248 threads the bilayer; it reads LFGNTGYYVVLAWCCISIVFF. Residues 249–278 are Cytoplasmic-facing; it reads MIRTLRLKILSEAAAEGVLVRGARNQLRMY. Residues 279-299 traverse the membrane as a helical segment; that stretch reads LTMAIAAVQPIFMYWLTYHLV. A topological domain (extracellular) is located at residue Arg300.

Belongs to the YIF1 family.

The protein resides in the endoplasmic reticulum membrane. It localises to the golgi apparatus membrane. Its subcellular location is the endoplasmic reticulum-Golgi intermediate compartment membrane. Its function is as follows. Functions in endoplasmic reticulum to Golgi vesicle-mediated transport and regulates the proper organization of the endoplasmic reticulum and the Golgi. Plays a key role in targeting to neuronal dendrites receptors such as HTR1A. Plays also a role in primary cilium and sperm flagellum assembly probably through protein transport to these compartments. The chain is Protein YIF1B-B (yif1b-b) from Xenopus laevis (African clawed frog).